The sequence spans 633 residues: Leucine-rich repeat and IQ domain-containing protein 3 (633 aa).

LRR repeat units lie at residues 51 to 72, 73 to 94, and 98 to 119; these read SLRVCIFSNNFVTDIQPLQGCK, KLIKLDLHGNQIKTLPDRTFWN, and NLKLLYLHDNGFAKLKNICVLS. The region spanning 132–179 is the LRRCT domain; sequence CPVSLKKGYRHVLVNSIWPLKALDHHVISDEEIIQNWHLPERFKTFSQ. Residues 215–244 form the IQ domain; the sequence is HNSPVLIIQRWIRGFIVRKHLSPYFTRKRH. The tract at residues 322 to 343 is disordered; the sequence is NSKQPRHHIQKGQNEMKSDSED. Positions 556–616 form a coiled coil; it reads EKREKRKYKQ…AKVEFINTYY (61 aa).

This chain is Leucine-rich repeat and IQ domain-containing protein 3 (Lrriq3), found in Rattus norvegicus (Rat).